The following is a 65-amino-acid chain: Small ribosomal subunit protein eS27 (65 aa).

Zn(2+)-binding residues include cysteine 21, cysteine 24, cysteine 40, and cysteine 43. The C4-type zinc-finger motif lies at 21-43 (CRDCGNVQVVFARPSSTVTCNIC).

This sequence belongs to the eukaryotic ribosomal protein eS27 family. Part of the 30S ribosomal subunit. Zn(2+) serves as cofactor.

The chain is Small ribosomal subunit protein eS27 from Thermoplasma acidophilum (strain ATCC 25905 / DSM 1728 / JCM 9062 / NBRC 15155 / AMRC-C165).